Consider the following 418-residue polypeptide: 3-phosphoshikimate 1-carboxyvinyltransferase (418 aa).

Residues Lys-26, Ser-27, and Arg-31 each coordinate 3-phosphoshikimate. Lys-26 contacts phosphoenolpyruvate. The phosphoenolpyruvate site is built by Gly-97 and Arg-125. Positions 170, 171, 172, 297, 320, and 324 each coordinate 3-phosphoshikimate. Residue Gln-172 coordinates phosphoenolpyruvate. Residue Asp-297 is the Proton acceptor of the active site. Residues Arg-328, Arg-375, and Lys-400 each contribute to the phosphoenolpyruvate site.

This sequence belongs to the EPSP synthase family. Monomer.

It localises to the cytoplasm. It catalyses the reaction 3-phosphoshikimate + phosphoenolpyruvate = 5-O-(1-carboxyvinyl)-3-phosphoshikimate + phosphate. The protein operates within metabolic intermediate biosynthesis; chorismate biosynthesis; chorismate from D-erythrose 4-phosphate and phosphoenolpyruvate: step 6/7. Functionally, catalyzes the transfer of the enolpyruvyl moiety of phosphoenolpyruvate (PEP) to the 5-hydroxyl of shikimate-3-phosphate (S3P) to produce enolpyruvyl shikimate-3-phosphate and inorganic phosphate. The sequence is that of 3-phosphoshikimate 1-carboxyvinyltransferase from Pseudomonas syringae pv. tomato (strain ATCC BAA-871 / DC3000).